The following is a 105-amino-acid chain: UPF0145 protein Sala_0338 (105 aa).

It belongs to the UPF0145 family.

This chain is UPF0145 protein Sala_0338, found in Sphingopyxis alaskensis (strain DSM 13593 / LMG 18877 / RB2256) (Sphingomonas alaskensis).